Consider the following 315-residue polypeptide: Olfactory receptor 2V1 (315 aa).

Helical transmembrane passes span 31–51 (TVML…LLIY), 59–79 (PMYF…CNIV), 100–120 (IQIG…GLMA), 145–165 (IAGS…VAAM), 196–216 (FDTL…SIIV), 239–259 (LATC…AMFI), and 273–293 (KVVS…IYSL). The cysteines at positions 98 and 180 are disulfide-linked.

The protein belongs to the G-protein coupled receptor 1 family.

Its subcellular location is the cell membrane. Its function is as follows. Odorant receptor. Activated by (+) and (-)-limonene. The polypeptide is Olfactory receptor 2V1 (Mus musculus (Mouse)).